The following is a 371-amino-acid chain: Monomethylxanthine methyltransferase 2 (371 aa).

Positions 18, 61, 66, 100, 101, 139, 140, and 156 each coordinate S-adenosyl-L-homocysteine. 3 residues coordinate theobromine: Tyr-157, His-160, and Trp-161. Residues Asn-178, Asp-260, Phe-262, and Asn-263 each coordinate Mg(2+). Theobromine is bound at residue Tyr-355.

It belongs to the methyltransferase superfamily. Type-7 methyltransferase family. Requires Mg(2+) as cofactor.

The enzyme catalyses 7-methylxanthine + S-adenosyl-L-methionine = theobromine + S-adenosyl-L-homocysteine + H(+). It participates in alkaloid biosynthesis. Functionally, involved in the biosynthesis of caffeine. Catalyzes the conversion of 7-methylxanthine (7mX) to theobromine and with a lower activity of paraxanthine to caffeine. This chain is Monomethylxanthine methyltransferase 2, found in Coffea canephora (Robusta coffee).